The following is a 118-amino-acid chain: Non-specific lipid-transfer protein 2 (118 aa).

The N-terminal stretch at 1–25 (MAGVMKLACMVLACMIVAGPITANA) is a signal peptide. Disulfide bonds link Cys-29/Cys-76, Cys-39/Cys-53, Cys-54/Cys-100, and Cys-74/Cys-114.

The protein belongs to the plant LTP family.

Its function is as follows. Plant non-specific lipid-transfer proteins transfer phospholipids as well as galactolipids across membranes. May play a role in wax or cutin deposition in the cell walls of expanding epidermal cells and certain secretory tissues. The sequence is that of Non-specific lipid-transfer protein 2 (LTP2) from Arabidopsis thaliana (Mouse-ear cress).